A 349-amino-acid polypeptide reads, in one-letter code: Fe(3+) ions import ATP-binding protein FbpC (349 aa).

The ABC transporter domain maps to 4–236; it reads LDFNKIGKSY…PIDEPTATFL (233 aa). ATP is bound at residue 36 to 43; that stretch reads GPSGSGKT.

It belongs to the ABC transporter superfamily. Fe(3+) ion importer (TC 3.A.1.10) family. In terms of assembly, the complex is composed of two ATP-binding proteins (FbpC), two transmembrane proteins (FbpB) and a solute-binding protein (FbpA).

Its subcellular location is the cell inner membrane. The enzyme catalyses Fe(3+)(out) + ATP + H2O = Fe(3+)(in) + ADP + phosphate + H(+). Its function is as follows. Part of the ABC transporter complex FbpABC involved in Fe(3+) ions import. Responsible for energy coupling to the transport system. The chain is Fe(3+) ions import ATP-binding protein FbpC from Yersinia enterocolitica.